The following is an 805-amino-acid chain: Leucine--tRNA ligase (805 aa).

The 'HIGH' region signature appears at 41–52 (PYPSGAGLHVGH). Positions 577–581 (KMSKS) match the 'KMSKS' region motif. Residue lysine 580 coordinates ATP.

The protein belongs to the class-I aminoacyl-tRNA synthetase family.

The protein resides in the cytoplasm. It carries out the reaction tRNA(Leu) + L-leucine + ATP = L-leucyl-tRNA(Leu) + AMP + diphosphate. The chain is Leucine--tRNA ligase from Staphylococcus aureus (strain USA300).